We begin with the raw amino-acid sequence, 95 residues long: Glutaredoxin 1 (95 aa).

The 95-residue stretch at 1-95 (MNKSILHTII…DKLLEHQPKN (95 aa)) folds into the Glutaredoxin domain. A disulfide bridge links Cys-17 with Cys-20.

Belongs to the glutaredoxin family. As to quaternary structure, monomer.

It is found in the cytoplasm. Its function is as follows. Has a glutathione-disulfide oxidoreductase activity in the presence of NADPH and glutathione reductase. Reduces low molecular weight disulfides and proteins. The sequence is that of Glutaredoxin 1 (grxC1) from Rickettsia prowazekii (strain Madrid E).